Consider the following 146-residue polypeptide: uncharacterized protein (146 aa).

Residues 7–24 (VIALFLVTGLTLYAIRLL) traverse the membrane as a helical segment.

It localises to the membrane. This is an uncharacterized protein from Haemophilus influenzae (strain ATCC 51907 / DSM 11121 / KW20 / Rd).